Reading from the N-terminus, the 418-residue chain is Serine hydroxymethyltransferase (418 aa).

(6S)-5,6,7,8-tetrahydrofolate-binding positions include L121 and 125 to 127 (GHL). K230 is modified (N6-(pyridoxal phosphate)lysine). (6S)-5,6,7,8-tetrahydrofolate contacts are provided by residues E246 and 355–357 (SPF).

The protein belongs to the SHMT family. In terms of assembly, homodimer. The cofactor is pyridoxal 5'-phosphate.

It is found in the cytoplasm. It carries out the reaction (6R)-5,10-methylene-5,6,7,8-tetrahydrofolate + glycine + H2O = (6S)-5,6,7,8-tetrahydrofolate + L-serine. It functions in the pathway one-carbon metabolism; tetrahydrofolate interconversion. The protein operates within amino-acid biosynthesis; glycine biosynthesis; glycine from L-serine: step 1/1. In terms of biological role, catalyzes the reversible interconversion of serine and glycine with tetrahydrofolate (THF) serving as the one-carbon carrier. This reaction serves as the major source of one-carbon groups required for the biosynthesis of purines, thymidylate, methionine, and other important biomolecules. Also exhibits THF-independent aldolase activity toward beta-hydroxyamino acids, producing glycine and aldehydes, via a retro-aldol mechanism. The polypeptide is Serine hydroxymethyltransferase (Streptococcus pneumoniae (strain 70585)).